Reading from the N-terminus, the 361-residue chain is UDP-N-acetylglucosamine--N-acetylmuramyl-(pentapeptide) pyrophosphoryl-undecaprenol N-acetylglucosamine transferase (361 aa).

UDP-N-acetyl-alpha-D-glucosamine contacts are provided by residues 11-13 (TGG), Asn124, Arg162, Ser193, and Gln292.

The protein belongs to the glycosyltransferase 28 family. MurG subfamily.

It localises to the cell inner membrane. The catalysed reaction is di-trans,octa-cis-undecaprenyl diphospho-N-acetyl-alpha-D-muramoyl-L-alanyl-D-glutamyl-meso-2,6-diaminopimeloyl-D-alanyl-D-alanine + UDP-N-acetyl-alpha-D-glucosamine = di-trans,octa-cis-undecaprenyl diphospho-[N-acetyl-alpha-D-glucosaminyl-(1-&gt;4)]-N-acetyl-alpha-D-muramoyl-L-alanyl-D-glutamyl-meso-2,6-diaminopimeloyl-D-alanyl-D-alanine + UDP + H(+). The protein operates within cell wall biogenesis; peptidoglycan biosynthesis. Functionally, cell wall formation. Catalyzes the transfer of a GlcNAc subunit on undecaprenyl-pyrophosphoryl-MurNAc-pentapeptide (lipid intermediate I) to form undecaprenyl-pyrophosphoryl-MurNAc-(pentapeptide)GlcNAc (lipid intermediate II). The chain is UDP-N-acetylglucosamine--N-acetylmuramyl-(pentapeptide) pyrophosphoryl-undecaprenol N-acetylglucosamine transferase from Elusimicrobium minutum (strain Pei191).